A 285-amino-acid polypeptide reads, in one-letter code: Undecaprenyl-diphosphatase 2 (285 aa).

A run of 8 helical transmembrane segments spans residues 5 to 25 (MDLL…LLPV), 47 to 67 (MTFL…VYFW), 86 to 106 (WYVL…QSLI), 122 to 142 (LFSN…LIIL), 156 to 176 (LPSA…RGFS), 198 to 218 (FSFA…LVRL), 235 to 255 (SLLL…LLAL), and 265 to 285 (GRWY…LTLA).

This sequence belongs to the UppP family.

It is found in the cell inner membrane. The enzyme catalyses di-trans,octa-cis-undecaprenyl diphosphate + H2O = di-trans,octa-cis-undecaprenyl phosphate + phosphate + H(+). Its function is as follows. Catalyzes the dephosphorylation of undecaprenyl diphosphate (UPP). Confers resistance to bacitracin. In Acinetobacter baylyi (strain ATCC 33305 / BD413 / ADP1), this protein is Undecaprenyl-diphosphatase 2.